Here is a 295-residue protein sequence, read N- to C-terminus: MSGALDVLQMKEEDVLKFLAAGTHLGGTNLDFQMEQYIYKRKSDGIYIINLKRTWEKLLLAARAIVAIENPADVSVISSRNTGQRAVLKFAAATGATPIAGRFTPGTFTNQIQAAFREPRLLVVTDPRADHQPLTEASYVNLPTIALCNTDSPLRYVDIAIPCNNKGAHSVGLMWWMLAREVLRMRGTISREHPWEVMPDLYFYRDPEEIEKEEQAAAEKAVTKEEFQGEWTAPAPEFTAAQPEVADWSEGVQVPSVPIQQFPTEDWSAQPATEDWSAAPTAQATEWVGATTEWS.

Ser-2 carries the post-translational modification N-acetylserine. Position 43 is a phosphoserine (Ser-43). Residue Lys-52 is modified to N6-acetyllysine. The interval 54–113 (TWEKLLLAARAIVAIENPADVSVISSRNTGQRAVLKFAAATGATPIAGRFTPGTFTNQIQ) is interaction with PPP1R16B. Lys-89 is subject to N6-acetyllysine; alternate. Lys-89 is covalently cross-linked (Glycyl lysine isopeptide (Lys-Gly) (interchain with G-Cter in SUMO2); alternate). Thr-97 carries the post-translational modification Phosphothreonine. 2 laminin-binding regions span residues 161 to 180 (IPCNNKGAHSVGLMWWMLAR) and 205 to 229 (RDPEEIEKEEQAAAEKAVTKEEFQG). [DE]-W-[ST] repeat units lie at residues 230–232 (EWT), 247–249 (DWS), 266–268 (DWS), 275–277 (DWS), and 293–295 (EWS). Residues 242–295 (QPEVADWSEGVQVPSVPIQQFPTEDWSAQPATEDWSAAPTAQATEWVGATTEWS) form a laminin-binding region. The interval 266–295 (DWSAQPATEDWSAAPTAQATEWVGATTEWS) is disordered.

The protein belongs to the universal ribosomal protein uS2 family. In terms of assembly, monomer (37LRP) and homodimer (67LR). Component of the small ribosomal subunit. Mature ribosomes consist of a small (40S) and a large (60S) subunit. The 40S subunit contains about 33 different proteins and 1 molecule of RNA (18S). The 60S subunit contains about 49 different proteins and 3 molecules of RNA (28S, 5.8S and 5S). Interacts with RPS21. Interacts with several laminins including at least LAMB1. Interacts with MDK. Interacts with PRNP. The mature dimeric form interacts with PPP1R16B (via its fourth ankyrin repeat). Interacts with PPP1CA only in the presence of PPP1R16B. In terms of processing, acylated. Acylation may be a prerequisite for conversion of the monomeric 37 kDa laminin receptor precursor (37LRP) to the mature dimeric 67 kDa laminin receptor (67LR), and may provide a mechanism for membrane association. Cleaved by stromelysin-3 (ST3) at the cell surface. Cleavage by stromelysin-3 may be a mechanism to alter cell-extracellular matrix interactions.

The protein resides in the cell membrane. The protein localises to the cytoplasm. It is found in the nucleus. Functionally, required for the assembly and/or stability of the 40S ribosomal subunit. Required for the processing of the 20S rRNA-precursor to mature 18S rRNA in a late step of the maturation of 40S ribosomal subunits. Also functions as a cell surface receptor for laminin. Plays a role in cell adhesion to the basement membrane and in the consequent activation of signaling transduction pathways. May play a role in cell fate determination and tissue morphogenesis. Also acts as a receptor for several other ligands, including the pathogenic prion protein, viruses, and bacteria. Acts as a PPP1R16B-dependent substrate of PPP1CA. Enables malignant tumor cells to penetrate laminin tissue and vessel barriers. Activates precursor thymic anti-OFA/iLRP specific cytotoxic T-cell. May induce CD8 T-suppressor cells secreting IL-10. This chain is Small ribosomal subunit protein uS2 (Rpsa), found in Mus musculus (Mouse).